The following is a 339-amino-acid chain: Ketol-acid reductoisomerase (NADP(+)) (339 aa).

The KARI N-terminal Rossmann domain maps to 1 to 182 (MRVYYDRDAD…GGGRAGVIET (182 aa)). NADP(+)-binding positions include 24–27 (YGSQ), R48, S51, T53, and 83–86 (DELQ). Residue H108 is part of the active site. G134 lines the NADP(+) pocket. One can recognise a KARI C-terminal knotted domain in the interval 183 to 328 (TFKEECETDL…EKLRAMMPWI (146 aa)). D191, E195, E227, and E231 together coordinate Mg(2+). S252 serves as a coordination point for substrate.

Belongs to the ketol-acid reductoisomerase family. Requires Mg(2+) as cofactor.

The enzyme catalyses (2R)-2,3-dihydroxy-3-methylbutanoate + NADP(+) = (2S)-2-acetolactate + NADPH + H(+). The catalysed reaction is (2R,3R)-2,3-dihydroxy-3-methylpentanoate + NADP(+) = (S)-2-ethyl-2-hydroxy-3-oxobutanoate + NADPH + H(+). The protein operates within amino-acid biosynthesis; L-isoleucine biosynthesis; L-isoleucine from 2-oxobutanoate: step 2/4. Its pathway is amino-acid biosynthesis; L-valine biosynthesis; L-valine from pyruvate: step 2/4. Involved in the biosynthesis of branched-chain amino acids (BCAA). Catalyzes an alkyl-migration followed by a ketol-acid reduction of (S)-2-acetolactate (S2AL) to yield (R)-2,3-dihydroxy-isovalerate. In the isomerase reaction, S2AL is rearranged via a Mg-dependent methyl migration to produce 3-hydroxy-3-methyl-2-ketobutyrate (HMKB). In the reductase reaction, this 2-ketoacid undergoes a metal-dependent reduction by NADPH to yield (R)-2,3-dihydroxy-isovalerate. This chain is Ketol-acid reductoisomerase (NADP(+)), found in Xanthobacter autotrophicus (strain ATCC BAA-1158 / Py2).